We begin with the raw amino-acid sequence, 703 residues long: Elongation factor G (703 aa).

In terms of domain architecture, tr-type G spans 9–292; it reads ERTRNIGIMA…AVVDYLPGPL (284 aa). Residues 18–25, 91–95, and 145–148 each bind GTP; these read AHIDAGKT, DTPGH, and NKMD.

Belongs to the TRAFAC class translation factor GTPase superfamily. Classic translation factor GTPase family. EF-G/EF-2 subfamily.

Its subcellular location is the cytoplasm. Functionally, catalyzes the GTP-dependent ribosomal translocation step during translation elongation. During this step, the ribosome changes from the pre-translocational (PRE) to the post-translocational (POST) state as the newly formed A-site-bound peptidyl-tRNA and P-site-bound deacylated tRNA move to the P and E sites, respectively. Catalyzes the coordinated movement of the two tRNA molecules, the mRNA and conformational changes in the ribosome. The sequence is that of Elongation factor G from Leuconostoc mesenteroides subsp. mesenteroides (strain ATCC 8293 / DSM 20343 / BCRC 11652 / CCM 1803 / JCM 6124 / NCDO 523 / NBRC 100496 / NCIMB 8023 / NCTC 12954 / NRRL B-1118 / 37Y).